Here is a 181-residue protein sequence, read N- to C-terminus: Swi1-interacting protein swi3 (181 aa).

The tract at residues 1–47 (MSTAASDSGVEKLVEENKREEVKKNEEEKEFDLGLEENPDSVKKPRK) is disordered. The span at 9–27 (GVEKLVEENKREEVKKNEE) shows a compositional bias: basic and acidic residues. Residues 28–39 (EKEFDLGLEENP) show a composition bias toward acidic residues.

The protein belongs to the CSM3 family. As to quaternary structure, fork protection complex (FPC) consisting of swi1 and swi3 interacts with mat1 cis-acting sequences and mat1-proximal polar-terminator of replication (RTS1).

The protein resides in the nucleus. Functionally, forms a fork protection complex (FPC) with swi1. FPC coordinates leading and lagging strand synthesis and moves with the replication fork. It is required for programmed fork-pausing which is necessary for mating-type switching. FPC stabilizes replication forks in a configuration that is recognized by replication checkpoint sensors. It is involved in termination at the mat1-proximal polar-terminator of replication (RTS1) and also required for activation of the Rad53-like checkpoint kinase cds1. The polypeptide is Swi1-interacting protein swi3 (swi3) (Schizosaccharomyces pombe (strain 972 / ATCC 24843) (Fission yeast)).